Reading from the N-terminus, the 361-residue chain is MLLALSQWIAEDIRAFNVFSYITLRTMLAALTALSISFLIGPAMIRSLTARKVGQSVRNDGPQSHLIKAGTPTMGGTLILTAVIVTTLLWADLSNRYIWVVSLTTLGFGAIGWVDDYRKVIQRNSKGLSASSKFFWQSIIALLVAVYLAMTADLPQHTEMIVPFFKEVAIPLGTFLFIVLTYLVIVGTSNAVNLTDGLDGLAIMPTVMISGALAIFAYVAGHAVFAKYLGIPHIPNAGELAVFCGALTGAGLAFLWFNTYPAEVFMGDVGALALGAALGVITVIVRQEIVLVIMGGVFVMEALSVMIQVASYKLFGQRVFRMAPLHHHYELKGWKENQVVVRFWIITLILVLIGLSTLKLR.

Transmembrane regions (helical) follow at residues 28–48, 73–93, 97–117, 134–154, 168–188, 200–220, 237–257, 264–284, 289–309, and 338–358; these read LAAL…IRSL, TMGG…WADL, YIWV…VDDY, FFWQ…TADL, VAIP…IVGT, GLAI…AYVA, AGEL…FLWF, VFMG…ITVI, IVLV…MIQV, and QVVV…LSTL.

Belongs to the glycosyltransferase 4 family. MraY subfamily. Requires Mg(2+) as cofactor.

Its subcellular location is the cell inner membrane. The catalysed reaction is UDP-N-acetyl-alpha-D-muramoyl-L-alanyl-gamma-D-glutamyl-meso-2,6-diaminopimeloyl-D-alanyl-D-alanine + di-trans,octa-cis-undecaprenyl phosphate = di-trans,octa-cis-undecaprenyl diphospho-N-acetyl-alpha-D-muramoyl-L-alanyl-D-glutamyl-meso-2,6-diaminopimeloyl-D-alanyl-D-alanine + UMP. It participates in cell wall biogenesis; peptidoglycan biosynthesis. In terms of biological role, catalyzes the initial step of the lipid cycle reactions in the biosynthesis of the cell wall peptidoglycan: transfers peptidoglycan precursor phospho-MurNAc-pentapeptide from UDP-MurNAc-pentapeptide onto the lipid carrier undecaprenyl phosphate, yielding undecaprenyl-pyrophosphoryl-MurNAc-pentapeptide, known as lipid I. This Nitrosomonas europaea (strain ATCC 19718 / CIP 103999 / KCTC 2705 / NBRC 14298) protein is Phospho-N-acetylmuramoyl-pentapeptide-transferase.